The following is a 118-amino-acid chain: Acidic elicitin A1 (118 aa).

A signal peptide spans 1–20; that stretch reads MNFRALFAATVAALVGSTSA. 3 cysteine pairs are disulfide-bonded: Cys23-Cys91, Cys47-Cys76, and Cys71-Cys115.

Belongs to the elicitin family.

It is found in the secreted. In terms of biological role, induces local and distal defense responses (incompatible hypersensitive reaction) in plants from the solanaceae and cruciferae families. Elicits leaf necrosis and causes the accumulation of pathogenesis-related proteins. Might interact with the lipidic molecules of the plasma membrane. The protein is Acidic elicitin A1 (B14) of Phytophthora cryptogea.